Consider the following 244-residue polypeptide: 5'-nucleotidase SurE 2 (244 aa).

A divalent metal cation-binding residues include D8, D9, S39, and N96.

Belongs to the SurE nucleotidase family. It depends on a divalent metal cation as a cofactor.

The protein localises to the cytoplasm. It carries out the reaction a ribonucleoside 5'-phosphate + H2O = a ribonucleoside + phosphate. Functionally, nucleotidase that shows phosphatase activity on nucleoside 5'-monophosphates. This Thermus thermophilus (strain ATCC BAA-163 / DSM 7039 / HB27) protein is 5'-nucleotidase SurE 2.